Here is a 431-residue protein sequence, read N- to C-terminus: REST corepressor 1 (431 aa).

Positions 1 to 10 (MIEKGAEISG) are enriched in basic and acidic residues. A disordered region spans residues 1 to 53 (MIEKGAEISGKRRGRNNAANSKSLGTNVNGSNSWEEGSSSSSSDDEPGGGGMR). Residues 17–28 (NAANSKSLGTNV) show a composition bias toward polar residues. The span at 29-42 (NGSNSWEEGSSSSS) shows a compositional bias: low complexity. The 86-residue stretch at 50–135 (GGMRVGLQYQ…KSLADLLNFT (86 aa)) folds into the ELM2 domain. The SANT 1 domain maps to 136–187 (PFPDEWTVEDRVLFEQAFSFHGKTFHRIQQMLPDKSIASLVKFYYSWKKTRS). Residues 190-262 (SVMDRHARKQ…NRAKRKPPNG (73 aa)) form a disordered region. Over residues 224-242 (EQPKEAKKEVPKNDTVPHI) the composition is skewed to basic and acidic residues. Residues 267-314 (QEDVEAVSANANAATTVLRQLDMELVSIKRQIQNIKQTNSAFKEKLQG) adopt a coiled-coil conformation. The SANT 2 domain occupies 327–378 (KFNARWTTEEQLLAVQAIRMYGRDFQAISDVIGNKSVVQVKNFFVNYRRRFN).

Belongs to the CoREST family. As to quaternary structure, component of a BHC histone deacetylase complex that contains KDM1A. Expressed in territories in which neurogenesis takes place.

It is found in the nucleus. In terms of biological role, essential component of the BHC complex, a corepressor complex that represses transcription of neuron-specific genes in non-neuronal cells. The BHC complex is recruited at RE1/NRSE sites by REST and acts by deacetylating and demethylating specific sites on histones, thereby acting as a chromatin modifier. In the BHC complex, it serves as a molecular beacon for the recruitment of molecular machinery that imposes silencing across a chromosomal interval. Plays a central role in demethylation of Lys-4 of histone H3 by promoting demethylase activity of KDM1A on core histones and nucleosomal substrates. This chain is REST corepressor 1 (rcor1), found in Xenopus laevis (African clawed frog).